A 359-amino-acid polypeptide reads, in one-letter code: DNA replication and repair protein RecF (359 aa).

G30–T37 is a binding site for ATP.

It belongs to the RecF family.

Its subcellular location is the cytoplasm. Its function is as follows. The RecF protein is involved in DNA metabolism; it is required for DNA replication and normal SOS inducibility. RecF binds preferentially to single-stranded, linear DNA. It also seems to bind ATP. In Flavobacterium johnsoniae (strain ATCC 17061 / DSM 2064 / JCM 8514 / BCRC 14874 / CCUG 350202 / NBRC 14942 / NCIMB 11054 / UW101) (Cytophaga johnsonae), this protein is DNA replication and repair protein RecF.